The sequence spans 152 residues: Acidic phospholipase A2 S16-19 (152 aa).

Positions 1–19 (MYPAHLLVLLAVCVSLLGA) are cleaved as a signal peptide. The propeptide occupies 20-27 (SNIPLPSL). Intrachain disulfides connect Cys38–Cys104, Cys54–Cys151, Cys71–Cys132, Cys78–Cys125, Cys88–Cys118, and Cys111–Cys123. Ca(2+)-binding residues include Tyr55, Gly57, and Gly59. His75 is an active-site residue. Residue Asp76 participates in Ca(2+) binding. Residue Asp126 is part of the active site.

The protein belongs to the phospholipase A2 family. Group I subfamily. D49 sub-subfamily. The cofactor is Ca(2+). In terms of processing, this enzyme lacks one of the seven disulfide bonds found in similar PLA2 proteins. As to expression, expressed by the venom gland.

The protein resides in the secreted. It carries out the reaction a 1,2-diacyl-sn-glycero-3-phosphocholine + H2O = a 1-acyl-sn-glycero-3-phosphocholine + a fatty acid + H(+). In terms of biological role, snake venom phospholipase A2 (PLA2) that inhibits collagen-induced platelet aggregation. PLA2 catalyzes the calcium-dependent hydrolysis of the 2-acyl groups in 3-sn-phosphoglycerides. This chain is Acidic phospholipase A2 S16-19, found in Austrelaps superbus (Lowland copperhead snake).